The sequence spans 265 residues: Isoprenyl transferase (265 aa).

Residue Asp-35 is part of the active site. Asp-35 lines the Mg(2+) pocket. Residues 36-39 (GNGR), Trp-40, Arg-48, His-52, and 80-82 (STE) contribute to the substrate site. The active-site Proton acceptor is Asn-83. Residues Trp-84, Arg-86, Arg-203, and 209–211 (RIS) contribute to the substrate site. Glu-222 contributes to the Mg(2+) binding site.

It belongs to the UPP synthase family. Homodimer. Mg(2+) is required as a cofactor.

Catalyzes the condensation of isopentenyl diphosphate (IPP) with allylic pyrophosphates generating different type of terpenoids. The chain is Isoprenyl transferase from Prochlorococcus marinus (strain MIT 9313).